A 233-amino-acid polypeptide reads, in one-letter code: UPF0173 metal-dependent hydrolase Igni_1254 (233 aa).

Belongs to the UPF0173 family.

The polypeptide is UPF0173 metal-dependent hydrolase Igni_1254 (Ignicoccus hospitalis (strain KIN4/I / DSM 18386 / JCM 14125)).